The sequence spans 103 residues: MESEEMLAGGLTEPRPATPEIQEIANKVKPQLEEKTNKTYEKFEAIIYRSQVVAGTNYYIKVHVGGNNYVHIRVFQSLPHQEDPLKLIGYQVDKTKDDELTGF.

M1 is subject to Blocked amino end (Met); partial. The segment at 1–20 is disordered; the sequence is MESEEMLAGGLTEPRPATPE. The Secondary area of contact motif lies at 51–55; the sequence is QVVAG.

It belongs to the cystatin family.

Its subcellular location is the cytoplasm. Its function is as follows. Potent inhibitor of cathepsins L and S, and papain. The polypeptide is Leukocyte cysteine proteinase inhibitor 1 (Sus scrofa (Pig)).